A 193-amino-acid polypeptide reads, in one-letter code: Corrinoid adenosyltransferase (193 aa).

Residues threonine 10 to threonine 18, lysine 28, arginine 137 to serine 142, and asparagine 163 each bind ATP.

This sequence belongs to the Cob(I)alamin adenosyltransferase family.

Its subcellular location is the cytoplasm. The catalysed reaction is 2 cob(II)yrinate a,c diamide + reduced [electron-transfer flavoprotein] + 2 ATP = 2 adenosylcob(III)yrinate a,c-diamide + 2 triphosphate + oxidized [electron-transfer flavoprotein] + 3 H(+). It catalyses the reaction 2 cob(II)alamin + reduced [electron-transfer flavoprotein] + 2 ATP = 2 adenosylcob(III)alamin + 2 triphosphate + oxidized [electron-transfer flavoprotein] + 3 H(+). The protein operates within cofactor biosynthesis; adenosylcobalamin biosynthesis; adenosylcobalamin from cob(II)yrinate a,c-diamide: step 2/7. This chain is Corrinoid adenosyltransferase, found in Mycobacterium bovis (strain ATCC BAA-935 / AF2122/97).